A 788-amino-acid polypeptide reads, in one-letter code: Protein kintoun (788 aa).

Disordered stretches follow at residues 194–249 (LRKP…SEQD), 415–438 (NNSEGLTSESNLDTGAPYLPEISP), and 628–754 (HKEH…SSSV). A compositionally biased stretch (basic and acidic residues) spans 225 to 241 (GKEKKDQKRVIKEEHKQ). Residues 417–427 (SEGLTSESNLD) show a composition bias toward polar residues. Composition is skewed to basic and acidic residues over residues 628-644 (HKEHCTDHSEHERDVGV) and 667-682 (ENTELDRDHTSERYEE). 2 stretches are compositionally biased toward polar residues: residues 685–701 (STSCTGESTSDQQQKDS) and 744–754 (NFDSRPASSSV).

The protein belongs to the PIH1 family. Kintoun subfamily.

The protein resides in the cytoplasm. It localises to the dynein axonemal particle. Required for cytoplasmic pre-assembly of axonemal dyneins, thereby playing a central role in motility in cilia and flagella. Involved in pre-assembly of dynein arm complexes in the cytoplasm before intraflagellar transport loads them for the ciliary compartment. The protein is Protein kintoun of Xenopus laevis (African clawed frog).